Consider the following 337-residue polypeptide: Molybdate import system permease protein MolB (337 aa).

Residues 1–5 (MQPDS) lie on the Cytoplasmic side of the membrane. The chain crosses the membrane as a helical span at residues 6–25 (YPKILFGLTLLLVITAVISL). The Periplasmic segment spans residues 26–51 (GIGRYSLSVPQIGQILWAKATALEID). A helical membrane pass occupies residues 52–87 (PVQQQVIFQVRLPRILTALCVGAGLALSGVVLQGIF). Residues 88 to 98 (RNPLVNPHIIG) lie on the Cytoplasmic side of the membrane. A helical transmembrane segment spans residues 99–113 (VTSGSAFGGTLAIFF). Residues 114 to 116 (GFS) are Periplasmic-facing. The chain crosses the membrane as a helical span at residues 117 to 140 (LYGLFTSTILFGFGTLALVFLFSF). Over 141–146 (KFNQRS) the chain is Cytoplasmic. The chain crosses the membrane as a helical span at residues 147-171 (LLMLILIGMILSGLFSALVSLLQYI). The Periplasmic segment spans residues 172-193 (SDTEEKLPSIVFWLMGSFATSN). Residues 194 to 214 (WEKLLFFFVPFLLCSSILLSL) traverse the membrane as a helical segment. Over 215-234 (SWRLNLLSLDEKEAKALGVK) the chain is Cytoplasmic. Residues 235-257 (MAPLRWLVIFLSGSLVACQVAIS) traverse the membrane as a helical segment. At 258–264 (GSIGWVG) the chain is on the periplasmic side. The chain crosses the membrane as a helical span at residues 265-275 (LIIPHLSRMLV). Residues 276 to 278 (GAN) lie on the Cytoplasmic side of the membrane. Residues 279–304 (HQSLLPCTMLVGATYMLLVDNVARSL) form a helical membrane-spanning segment. At 305-310 (SDAEIP) the chain is on the periplasmic side. The helical transmembrane segment at 311-329 (ISILTALIGAPLFGVLVYK) threads the bilayer. The Cytoplasmic portion of the chain corresponds to 330 to 337 (LKRGGMNE).

This sequence belongs to the binding-protein-dependent transport system permease family. FecCD subfamily. As to quaternary structure, the complex is composed of two ATP-binding proteins (MolC), two transmembrane proteins (MolB) and a solute-binding protein (MolA).

Its subcellular location is the cell inner membrane. With respect to regulation, the MolBCA complex shows a decrease in affinity in the presence of increasing concentrations of substrate and nucleotide. Functionally, part of the ABC transporter complex MolBCA involved in molybdate import. Responsible for the translocation of the substrate across the membrane. Functions as a low-affinity molybdate transporter. The polypeptide is Molybdate import system permease protein MolB (Haemophilus influenzae (strain ATCC 51907 / DSM 11121 / KW20 / Rd)).